We begin with the raw amino-acid sequence, 332 residues long: MAALKDQLIVNLLKEEQVPQNKITVVGVGAVGMACAISILMKDLADELALVDVIEDKLKGEMMDLQHGSLFLKTPKIVSSKDYSVTANSKLVIITAGARQQEGESRLNLVQRNVNIFKFIIPNVVKYSPQCKLLIVSNPVDILTYVAWKISGFPKNRVIGSGCNLDSARFRYLMGERLGVHPLSCHGWVLGEHGDSSVPVWSGVNVAGVSLKSLNPQLGTDADKEQWKDVHKQVVDSAYEVIKLKGYTSWAIGLSVADLAESIMKNLRRVHPISTMIKGLYGIKEDVFLSVPCILGQNGISDVVKVTLTPDEEARLKKSADTLWGIQKELQF.

A2 bears the N-acetylalanine mark. N6-acetyllysine; alternate is present on K5. N6-succinyllysine; alternate is present on K5. Position 14 is an N6-acetyllysine (K14). Position 29-57 (29-57 (GAVGMACAISILMKDLADELALVDVIEDK)) interacts with NAD(+). Position 57 is an N6-acetyllysine; alternate (K57). Residue K57 forms a Glycyl lysine isopeptide (Lys-Gly) (interchain with G-Cter in SUMO2); alternate linkage. An N6-acetyllysine modification is found at K81. An NAD(+)-binding site is contributed by R99. Substrate is bound at residue R106. K118 is modified (N6-acetyllysine; alternate). K118 is subject to N6-succinyllysine; alternate. An N6-acetyllysine modification is found at K126. N138 lines the NAD(+) pocket. Substrate contacts are provided by N138 and R169. H193 acts as the Proton acceptor in catalysis. Phosphoserine is present on S213. An N6-acetyllysine mark is found at K224 and K232. Residue Y239 is modified to Phosphotyrosine. N6-acetyllysine is present on K243. Substrate is bound at residue T248. A Phosphothreonine modification is found at T309. K318 bears the N6-acetyllysine; alternate mark. K318 carries the N6-succinyllysine; alternate modification. T322 bears the Phosphothreonine mark.

It belongs to the LDH/MDH superfamily. LDH family. As to quaternary structure, homotetramer. Interacts with PTEN upstream reading frame protein MP31. In terms of processing, ISGylated.

It localises to the cytoplasm. The enzyme catalyses (S)-lactate + NAD(+) = pyruvate + NADH + H(+). It functions in the pathway fermentation; pyruvate fermentation to lactate; (S)-lactate from pyruvate: step 1/1. Its function is as follows. Interconverts simultaneously and stereospecifically pyruvate and lactate with concomitant interconversion of NADH and NAD(+). The polypeptide is L-lactate dehydrogenase A chain (Ldha) (Rattus norvegicus (Rat)).